We begin with the raw amino-acid sequence, 346 residues long: Methylthioribose-1-phosphate isomerase (346 aa).

Substrate is bound by residues R48–A50, R91, and Q196. The Proton donor role is filled by D237. N247–K248 is a binding site for substrate.

The protein belongs to the eIF-2B alpha/beta/delta subunits family. MtnA subfamily.

It catalyses the reaction 5-(methylsulfanyl)-alpha-D-ribose 1-phosphate = 5-(methylsulfanyl)-D-ribulose 1-phosphate. The protein operates within amino-acid biosynthesis; L-methionine biosynthesis via salvage pathway; L-methionine from S-methyl-5-thio-alpha-D-ribose 1-phosphate: step 1/6. In terms of biological role, catalyzes the interconversion of methylthioribose-1-phosphate (MTR-1-P) into methylthioribulose-1-phosphate (MTRu-1-P). The polypeptide is Methylthioribose-1-phosphate isomerase (Thermosipho africanus (strain TCF52B)).